Reading from the N-terminus, the 386-residue chain is Phosphoglycerate kinase (386 aa).

Substrate-binding positions include 21–23, R36, 59–62, R113, and R146; these read DLN and HLGR. ATP is bound by residues K197, E314, and 340–343; that span reads GGDT.

It belongs to the phosphoglycerate kinase family. As to quaternary structure, monomer.

The protein localises to the cytoplasm. It catalyses the reaction (2R)-3-phosphoglycerate + ATP = (2R)-3-phospho-glyceroyl phosphate + ADP. Its pathway is carbohydrate degradation; glycolysis; pyruvate from D-glyceraldehyde 3-phosphate: step 2/5. This chain is Phosphoglycerate kinase, found in Marinobacter nauticus (strain ATCC 700491 / DSM 11845 / VT8) (Marinobacter aquaeolei).